We begin with the raw amino-acid sequence, 1592 residues long: ABC transporter ATP-binding protein/permease VMR1 (1592 aa).

Residues methionine 1–leucine 33 lie on the Vacuolar side of the membrane. Asparagine 11 carries N-linked (GlcNAc...) asparagine glycosylation. The helical transmembrane segment at proline 34 to tyrosine 54 threads the bilayer. Residues valine 55–arginine 74 are Cytoplasmic-facing. A helical transmembrane segment spans residues lysine 75–asparagine 95. Residues valine 96–glycine 100 are Vacuolar-facing. Residues arginine 101–lysine 121 traverse the membrane as a helical segment. Residues asparagine 122–proline 131 are Cytoplasmic-facing. A helical membrane pass occupies residues serine 132–glycine 152. The Vacuolar segment spans residues leucine 153 to valine 170. The chain crosses the membrane as a helical span at residues threonine 171 to arginine 191. The Cytoplasmic segment spans residues serine 192–alanine 329. The helical transmembrane segment at leucine 330–isoleucine 350 threads the bilayer. The region spanning leucine 338 to glutamine 632 is the ABC transmembrane type-1 1 domain. Residues valine 351–alanine 379 are Vacuolar-facing. Asparagine 370 carries N-linked (GlcNAc...) asparagine glycosylation. The chain crosses the membrane as a helical span at residues tryptophan 380–glycine 400. Topologically, residues glutamine 401 to tyrosine 465 are cytoplasmic. A helical membrane pass occupies residues leucine 466–phenylalanine 486. The Vacuolar segment spans residues leucine 487–valine 489. A helical membrane pass occupies residues serine 490–asparagine 510. Topologically, residues leucine 511–serine 572 are cytoplasmic. A helical transmembrane segment spans residues valine 573–cysteine 593. Over threonine 594–threonine 614 the chain is Vacuolar. A helical transmembrane segment spans residues leucine 615–valine 635. At serine 636 to isoleucine 989 the chain is on the cytoplasmic side. In terms of domain architecture, ABC transporter 1 spans isoleucine 664–leucine 908. Glycine 702–serine 709 serves as a coordination point for ATP. Residues leucine 981 to methionine 1282 form the ABC transmembrane type-1 2 domain. Residues threonine 990–asparagine 1010 traverse the membrane as a helical segment. At valine 1011–isoleucine 1051 the chain is on the vacuolar side. Residues glutamine 1052–arginine 1072 form a helical membrane-spanning segment. Topologically, residues lysine 1073–proline 1115 are cytoplasmic. Residues tyrosine 1116–valine 1136 form a helical membrane-spanning segment. A topological domain (vacuolar) is located at residue isoleucine 1137. The helical transmembrane segment at threonine 1138 to tryptophan 1158 threads the bilayer. Residues tyrosine 1159–valine 1229 are Cytoplasmic-facing. Residues aspartate 1230–asparagine 1250 form a helical membrane-spanning segment. Over isoleucine 1251–aspartate 1252 the chain is Vacuolar. A helical transmembrane segment spans residues serine 1253 to leucine 1273. Residues valine 1274–lysine 1592 lie on the Cytoplasmic side of the membrane. The region spanning isoleucine 1323–arginine 1572 is the ABC transporter 2 domain. Glycine 1357 to serine 1364 contacts ATP.

It belongs to the ABC transporter superfamily. In terms of assembly, ABC transporter which may be involved in multidrug resistance.

The protein resides in the vacuole membrane. This Saccharomyces cerevisiae (strain ATCC 204508 / S288c) (Baker's yeast) protein is ABC transporter ATP-binding protein/permease VMR1 (VMR1).